A 732-amino-acid chain; its full sequence is Iron-sulfur clusters transporter ATM1, mitochondrial (732 aa).

The transit peptide at 1–55 (MGFGSCSRHALFTPAAFSGSFTTMTTSCFKRVYTAQIHGGDALGKRLPSVSSFSG) directs the protein to the mitochondrion. At 56-143 (QLPRHGLHRQ…KNNPNVKFRV (88 aa)) the chain is on the mitochondrial matrix side. The interval 71 to 114 (STSHRRQTSPPPSPRTTSQSPTVPSKASTTPPTSLNTSKPIATE) is disordered. A compositionally biased stretch (low complexity) spans 85–95 (RTTSQSPTVPS). The span at 96–114 (KASTTPPTSLNTSKPIATE) shows a compositional bias: polar residues. A helical transmembrane segment spans residues 144–164 (IGALTLLVAGKVLNVQVPFFF). Residues 144–432 (IGALTLLVAG…LGTVYRELRQ (289 aa)) enclose the ABC transmembrane type-1 domain. The Mitochondrial intermembrane portion of the chain corresponds to 165 to 181 (KTIVDSLNVPITESTTV). A helical membrane pass occupies residues 182–202 (WVLAGASIAGYGAARILTTLF). Residues 203–262 (GELRNAVFASVAQNAIRKVARETFEHLLNMDMKFHLERQTGGLTRAIDRGTKGISFILSS) lie on the Mitochondrial matrix side of the membrane. A helical membrane pass occupies residues 263 to 283 (IVFHVIPTALEISMVCGILSW). Residue lysine 284 is a topological domain, mitochondrial intermembrane. A helical transmembrane segment spans residues 285–305 (FGWDFAAVTAITMLLYTWFTI). Residues 306 to 378 (KTTAWRTTFR…SLAALNSGQN (73 aa)) are Mitochondrial matrix-facing. Glutathione is bound by residues 311 to 315 (RTTFR) and 374 to 377 (NSGQ). Residues 379–399 (FIFSSALTMMMLLGAQGIVKG) traverse the membrane as a helical segment. Residues 400–405 (TMTVGD) lie on the Mitochondrial intermembrane side of the membrane. Residues 406–426 (LVLVNQLVFQLSLPLNFLGTV) form a helical membrane-spanning segment. Glycine 424 contacts glutathione. At 427–732 (YRELRQSLID…LEVVDEKKKQ (306 aa)) the chain is on the mitochondrial matrix side. In terms of domain architecture, ABC transporter spans 466 to 702 (IEFRNVAFAY…PGGVYHRLWQ (237 aa)). Residues tyrosine 475 and 499–506 (GPSGCGKS) contribute to the ATP site. The segment at 708–732 (STQPTDEEIERQREELEVVDEKKKQ) is disordered. Over residues 717–732 (ERQREELEVVDEKKKQ) the composition is skewed to basic and acidic residues.

The protein belongs to the ABC transporter superfamily. ABCB family. Heavy Metal importer (TC 3.A.1.210) subfamily. In terms of assembly, homodimer.

The protein resides in the mitochondrion inner membrane. In terms of biological role, performs an essential function in the generation of cytoplasmic iron-sulfur proteins by mediating the ATP-dependent export of mitochondrial Fe/S cluster precursors synthesized by NFS1 and other mitochondrial proteins. Hydrolyzes ATP. Binds glutathione and may function by transporting a glutathione-conjugated iron-sulfur compound. Plays a role during copper stress, in a manner dependent on the copper metalloregulatory transcription factor CUF1. This Cryptococcus neoformans var. grubii serotype A (strain H99 / ATCC 208821 / CBS 10515 / FGSC 9487) (Filobasidiella neoformans var. grubii) protein is Iron-sulfur clusters transporter ATM1, mitochondrial.